The sequence spans 35 residues: Photosystem II reaction center protein T (35 aa).

A helical transmembrane segment spans residues 3-23 (ALVYTFLLVSTLGIIFFAIFF).

This sequence belongs to the PsbT family. As to quaternary structure, PSII is composed of 1 copy each of membrane proteins PsbA, PsbB, PsbC, PsbD, PsbE, PsbF, PsbH, PsbI, PsbJ, PsbK, PsbL, PsbM, PsbT, PsbY, PsbZ, Psb30/Ycf12, at least 3 peripheral proteins of the oxygen-evolving complex and a large number of cofactors. It forms dimeric complexes.

The protein localises to the plastid. The protein resides in the chloroplast thylakoid membrane. In terms of biological role, found at the monomer-monomer interface of the photosystem II (PS II) dimer, plays a role in assembly and dimerization of PSII. PSII is a light-driven water plastoquinone oxidoreductase, using light energy to abstract electrons from H(2)O, generating a proton gradient subsequently used for ATP formation. This is Photosystem II reaction center protein T from Oenothera argillicola (Appalachian evening primrose).